The primary structure comprises 318 residues: Homoserine kinase (318 aa).

Residue 97 to 107 (PIGSGLGSSAC) coordinates ATP.

It belongs to the GHMP kinase family. Homoserine kinase subfamily.

The protein localises to the cytoplasm. The enzyme catalyses L-homoserine + ATP = O-phospho-L-homoserine + ADP + H(+). The protein operates within amino-acid biosynthesis; L-threonine biosynthesis; L-threonine from L-aspartate: step 4/5. Catalyzes the ATP-dependent phosphorylation of L-homoserine to L-homoserine phosphate. In Vibrio atlanticus (strain LGP32) (Vibrio splendidus (strain Mel32)), this protein is Homoserine kinase.